Reading from the N-terminus, the 355-residue chain is 3-dehydroquinate synthase (355 aa).

NAD(+) contacts are provided by residues 71 to 76 (EGEASK), 105 to 109 (GVVGD), 129 to 130 (TS), lysine 142, and lysine 151. Positions 184, 246, and 263 each coordinate Zn(2+).

This sequence belongs to the sugar phosphate cyclases superfamily. Dehydroquinate synthase family. Co(2+) serves as cofactor. Requires Zn(2+) as cofactor. It depends on NAD(+) as a cofactor.

It is found in the cytoplasm. The enzyme catalyses 7-phospho-2-dehydro-3-deoxy-D-arabino-heptonate = 3-dehydroquinate + phosphate. The protein operates within metabolic intermediate biosynthesis; chorismate biosynthesis; chorismate from D-erythrose 4-phosphate and phosphoenolpyruvate: step 2/7. Its function is as follows. Catalyzes the conversion of 3-deoxy-D-arabino-heptulosonate 7-phosphate (DAHP) to dehydroquinate (DHQ). This Streptococcus thermophilus (strain ATCC BAA-491 / LMD-9) protein is 3-dehydroquinate synthase.